The chain runs to 356 residues: Chitin elicitor-binding protein (356 aa).

Residues 1–28 form the signal peptide; that stretch reads MASLTAALATPAAAALLLLVLLAAPASA. N-linked (GlcNAc...) asparagine glycosylation is present at Asn30. Cystine bridges form between Cys33–Cys100, Cys41–Cys164, Cys98–Cys162, and Cys100–Cys164. 50–51 serves as a coordination point for chitin; sequence PN. Asn63 and Asn89 each carry an N-linked (GlcNAc...) asparagine glycan. 2 LysM domains span residues 111–158 and 175–219; these read PIYV…TLWI and LAYS…ILDV. Residues 117 to 123, Asn142, 145 to 152, Thr155, and Gly182 each bind chitin; these read PQDGLDA and PDPNKINV. N-linked (GlcNAc...) asparagine glycosylation occurs at Asn151. Asn184 carries an N-linked (GlcNAc...) asparagine glycan. Residues Ser186 and 211–213 contribute to the chitin site; that span reads LQM. 2 disulfide bridges follow: Cys224–Cys257 and Cys252–Cys274. 5 N-linked (GlcNAc...) asparagine glycosylation sites follow: Asn265, Asn281, Asn290, Asn306, and Asn319. The helical transmembrane segment at 336-356 threads the bilayer; that stretch reads RSMWSMSVISFHMVLIIICFL.

Forms homooligomer. Interacts with CERK1. Binds to chitin oligosaccharide elicitor. Interacts with LYP4 and LYP6. N-glycosylated. In terms of tissue distribution, expressed in seedlings, roots, shoots, stems and flowers.

It is found in the cell membrane. Functionally, chitin elicitor-binding protein involved in the perception and transduction of chitin oligosaccharide elicitor signal for defense responses. This is Chitin elicitor-binding protein from Oryza sativa subsp. japonica (Rice).